The following is a 396-amino-acid chain: Tryptophan synthase beta chain (396 aa).

Lys88 carries the post-translational modification N6-(pyridoxal phosphate)lysine.

This sequence belongs to the TrpB family. As to quaternary structure, tetramer of two alpha and two beta chains. The cofactor is pyridoxal 5'-phosphate.

The enzyme catalyses (1S,2R)-1-C-(indol-3-yl)glycerol 3-phosphate + L-serine = D-glyceraldehyde 3-phosphate + L-tryptophan + H2O. It participates in amino-acid biosynthesis; L-tryptophan biosynthesis; L-tryptophan from chorismate: step 5/5. Its function is as follows. The beta subunit is responsible for the synthesis of L-tryptophan from indole and L-serine. This chain is Tryptophan synthase beta chain, found in Shewanella baltica (strain OS195).